A 310-amino-acid chain; its full sequence is MRIVFAGTPEFAAEHLKALLDSPYEIVAVYTQPDRPAGRGQKLMPSAVKALAVAHDIPVYQPQTLRNPEAQAELAALKPDLMVVVAYGLILPQVVLDIPRLGCINSHASLLPRWRGAAPIQRAVEAGDAESGVTVMRMEAGLDTGPMLLKVVTPISAEDTGGTLHDRLAAMGPGAVVQAIAGLADGSLQGEVQDDTLATYAHKLNKDEARIDWNRPAVELERLIRAFNPWPVCHSTLDGESVKVLAANLSTGKGTPGEILSASKDGLVVACGDGALSLTRLQLPGGKALAFSDLFNSRREKFAGGKVLGQ.

Residue 109-112 participates in (6S)-5,6,7,8-tetrahydrofolate binding; that stretch reads SLLP.

This sequence belongs to the Fmt family.

It catalyses the reaction L-methionyl-tRNA(fMet) + (6R)-10-formyltetrahydrofolate = N-formyl-L-methionyl-tRNA(fMet) + (6S)-5,6,7,8-tetrahydrofolate + H(+). In terms of biological role, attaches a formyl group to the free amino group of methionyl-tRNA(fMet). The formyl group appears to play a dual role in the initiator identity of N-formylmethionyl-tRNA by promoting its recognition by IF2 and preventing the misappropriation of this tRNA by the elongation apparatus. This chain is Methionyl-tRNA formyltransferase, found in Pseudomonas entomophila (strain L48).